The primary structure comprises 353 residues: D-alanine--D-alanine ligase (353 aa).

Residues 141-349 (KAAFAAAGLP…LPDLVAQLVH (209 aa)) form the ATP-grasp domain. 176-231 (EAELGYPCFVKPANMGSSVGISKARHRDQLLAGLKEAARHDTRLVVEHGVSARELE) serves as a coordination point for ATP. Residues aspartate 302, glutamate 316, and asparagine 318 each coordinate Mg(2+).

This sequence belongs to the D-alanine--D-alanine ligase family. The cofactor is Mg(2+). It depends on Mn(2+) as a cofactor.

The protein resides in the cytoplasm. It catalyses the reaction 2 D-alanine + ATP = D-alanyl-D-alanine + ADP + phosphate + H(+). It functions in the pathway cell wall biogenesis; peptidoglycan biosynthesis. Functionally, cell wall formation. The polypeptide is D-alanine--D-alanine ligase (Synechococcus sp. (strain CC9311)).